The sequence spans 335 residues: Auxin-responsive protein IAA6 (335 aa).

Residues 51–55 (LKLGL) carry the EAR-like (transcriptional repression) motif. 3 disordered regions span residues 81–102 (LSFF…GAKR), 143–180 (KKGC…VGWP), and 188–207 (NLAS…DNAN). The region spanning 217 to 321 (NPLVKINMDG…TAKRLRVLRS (105 aa)) is the PB1 domain.

The protein belongs to the Aux/IAA family. In terms of assembly, homodimers and heterodimers. In terms of tissue distribution, highly expressed in roots. Expressed in shoots and flowers.

It localises to the nucleus. Its function is as follows. Aux/IAA proteins are short-lived transcriptional factors that function as repressors of early auxin response genes at low auxin concentrations. The protein is Auxin-responsive protein IAA6 (IAA6) of Oryza sativa subsp. japonica (Rice).